The following is a 121-amino-acid chain: Large ribosomal subunit protein uL18 (121 aa).

Residues 63–88 form a disordered region; that stretch reads AAIRPDPSPKKSQKQPPKTHKRYNLK. Over residues 73-87 the composition is skewed to basic residues; sequence KSQKQPPKTHKRYNL.

The protein belongs to the universal ribosomal protein uL18 family. Component of the large ribosomal subunit (LSU).

It is found in the cytoplasm. The protein resides in the nucleus. In terms of biological role, component of the ribosome, a large ribonucleoprotein complex responsible for the synthesis of proteins in the cell. The small ribosomal subunit (SSU) binds messenger RNAs (mRNAs) and translates the encoded message by selecting cognate aminoacyl-transfer RNA (tRNA) molecules. The large subunit (LSU) contains the ribosomal catalytic site termed the peptidyl transferase center (PTC), which catalyzes the formation of peptide bonds, thereby polymerizing the amino acids delivered by tRNAs into a polypeptide chain. The nascent polypeptides leave the ribosome through a tunnel in the LSU and interact with protein factors that function in enzymatic processing, targeting, and the membrane insertion of nascent chains at the exit of the ribosomal tunnel. In Solanum melongena (Eggplant), this protein is Large ribosomal subunit protein uL18 (RPL5).